Consider the following 945-residue polypeptide: Isoleucine--tRNA ligase (945 aa).

The short motif at 67-77 (PYANGQIHLGH) is the 'HIGH' region element. Residue E573 coordinates L-isoleucyl-5'-AMP. The short motif at 614-618 (KMSKS) is the 'KMSKS' region element. Position 617 (K617) interacts with ATP. Residues C908, C911, C928, and C931 each coordinate Zn(2+).

The protein belongs to the class-I aminoacyl-tRNA synthetase family. IleS type 1 subfamily. As to quaternary structure, monomer. Zn(2+) is required as a cofactor.

The protein resides in the cytoplasm. The catalysed reaction is tRNA(Ile) + L-isoleucine + ATP = L-isoleucyl-tRNA(Ile) + AMP + diphosphate. Catalyzes the attachment of isoleucine to tRNA(Ile). As IleRS can inadvertently accommodate and process structurally similar amino acids such as valine, to avoid such errors it has two additional distinct tRNA(Ile)-dependent editing activities. One activity is designated as 'pretransfer' editing and involves the hydrolysis of activated Val-AMP. The other activity is designated 'posttransfer' editing and involves deacylation of mischarged Val-tRNA(Ile). The chain is Isoleucine--tRNA ligase from Acinetobacter baylyi (strain ATCC 33305 / BD413 / ADP1).